The chain runs to 184 residues: Ras-related protein Rap-1A (184 aa).

GTP is bound by residues 10–18 (GSGGVGKSA), 29–35 (VEKYDPT), G60, and 116–119 (NKCD). An Effector region motif is present at residues 32-40 (YDPTIEDSY). Residue C181 is modified to Cysteine methyl ester. Residue C181 is the site of S-geranylgeranyl cysteine attachment. A propeptide spans 182–184 (LLL) (removed in mature form).

This sequence belongs to the small GTPase superfamily. Ras family. Found in a complex, at least composed of ITGB1BP1, KRIT1 and RAP1A. Interacts (active GTP-bound form preferentially) with KRIT1 (via C-terminus FERM domain); the interaction does not induce the opening conformation of KRIT1. Found in a complex composed of CDH1, RAP1A and PKP3; PKP3 acts as a scaffold protein within the complex, the complex is required for CDH1 localization to mature desmosome cell junctions. In its GTP-bound form interacts with PLCE1 and RADIL. Interacts with SGSM1, SGSM2 and SGSM3. Interacts (via GTP-bound active form) with RAPGEF2 (via Ras-associating domain). Interacts with TBC1D21. Interacts with RAP1GDS1.

It localises to the cell membrane. Its subcellular location is the cytoplasm. It is found in the perinuclear region. The protein localises to the cell junction. The protein resides in the early endosome. It carries out the reaction GTP + H2O = GDP + phosphate + H(+). Activated by guanine nucleotide-exchange factors (GEF) EPAC and EPAC2 in a cAMP-dependent manner, and GFR. Its function is as follows. Counteracts the mitogenic function of Ras, at least partly because it can interact with Ras GAPs and RAF in a competitive manner. Together with ITGB1BP1, regulates KRIT1 localization to microtubules and membranes. Plays a role in nerve growth factor (NGF)-induced neurite outgrowth. Plays a role in the regulation of embryonic blood vessel formation. Involved in the establishment of basal endothelial barrier function. Facilitates the progressive accumulation of CDH1 at mature desmosome junctions via cAMP-dependent signaling and its interaction with PKP3. May be involved in the regulation of the vascular endothelial growth factor receptor KDR expression at endothelial cell-cell junctions. This Bos taurus (Bovine) protein is Ras-related protein Rap-1A (RAP1A).